A 433-amino-acid polypeptide reads, in one-letter code: Steroid hormone receptor ERR2 (433 aa).

Residues 1–38 form a disordered region; that stretch reads MSSEDRHLGSSCGSFIKTEPSSPSSGIDALSHHSPSGS. The interaction with NANOG stretch occupies residues 93–211; that stretch reads YMLNAIPKRL…SPPAKKPLTK (119 aa). The nuclear receptor DNA-binding region spans 100–186; sequence KRLCLVCGDI…RVRGGRQKYK (87 aa). 2 consecutive NR C4-type zinc fingers follow at residues 103-123 and 139-163; these read CLVCGDIASGYHYGVASCEAC and CPATNECEITKRRRKSCQACRFMKC. The essential for ESRRB transcriptional activity and interaction with NCOA3 stretch occupies residues 203 to 433; it reads PPAKKPLTKI…LFLEMLEAKV (231 aa). Positions 208-432 constitute an NR LBD domain; that stretch reads PLTKIVSNLL…KLFLEMLEAK (225 aa).

It belongs to the nuclear hormone receptor family. NR3 subfamily. In terms of assembly, binds DNA as a monomer. Interacts with NR0B1; represses ESRRB activity at the GATA6 promoter. Interacts with NANOG; reciprocally modulates their transcriptional activities and activates POU5F1 expression. Interacts with NCOA3; mediates the interaction between ESRRB and RNA polymerase II complexes and allows NCOA3 corecruitment to ESRRB, KLF4, NANOG, and SOX2 enhancer regions to trigger ESRRB-dependent gene activation involved in self-renewal and pluripotency. Interacts with KDM1A; co-occupes the core set of ESRRB targets including ELF5 and EOMES. Interacts with the multiprotein complex Integrator, at least composed of INTS1, INTS2, INTS3, INTS4, INTS5, INTS6, INTS7, INTS8, INTS9/RC74, INTS10, INTS11/CPSF3L and INTS12; ESRRB is probably not a core component of the integrator complex and associates to integrator via its interaction with INTS1 and INTS9; attracts the transcriptional machinery. Interacts with JARID2. Interacts with POU5F1; recruits ESRRB near the POU5F1-SOX2 element in the NANOG proximal promoter leading to activation of NANOG expression; the interaction is DNA independent. Acetylated by PCAF/KAT2 (in vitro). In terms of tissue distribution, highly expressed in undifferentiated ESCs. Expressed in immature horizontal cells and in rod photoreceptors at intermediate and late stages of differentiation. Expressed in endolymph-producing epithelial cells.

It localises to the nucleus. It is found in the cytoplasm. The protein localises to the chromosome. Its function is as follows. Transcription factor that binds a canonical ESRRB recognition (ERRE) sequence 5'TCAAGGTCA-3' localized on promoter and enhancer of targets genes regulating their expression or their transcriptional activity. Plays a role, in a LIF-independent manner, in maintainance of self-renewal and pluripotency of embryonic and trophoblast stem cells through different signaling pathways including FGF signaling pathway and Wnt signaling pathways. Involved in morula development (2-16 cells embryos) by acting as a regulator at the 8-cell stage. Upon FGF signaling pathway activation, interacts with KDM1A by directly binding to enhancer site of ELF5 and EOMES and activating their transcription leading to self-renewal of trophoblast stem cells. Also regulates expression of multiple rod-specific genes and is required for survival of this cell type. Plays a role as transcription factor activator of GATA6, NR0B1, POU5F1 and PERM1. Plays a role as transcription factor repressor of NFE2L2 transcriptional activity and ESR1 transcriptional activity. During mitosis remains bound to a subset of interphase target genes, including pluripotency regulators, through the canonical ESRRB recognition (ERRE) sequence, leading to their transcriptional activation in early G1 phase. Can coassemble on structured DNA elements with other transcription factors like SOX2, POU5F1, KDM1A and NCOA3 to trigger ESRRB-dependent gene activation. This mechanism, in the case of SOX2 corecruitment prevents the embryonic stem cells (ESCs) to epiblast stem cells (EpiSC) transition through positive regulation of NR0B1 that inhibits the EpiSC transcriptional program. Also plays a role inner ear development by controlling expression of ion channels and transporters and in early placentation. The chain is Steroid hormone receptor ERR2 from Mus musculus (Mouse).